The sequence spans 394 residues: Salivary plasminogen activator gamma (394 aa).

An N-terminal signal peptide occupies residues 1-36 (MVNTMKTKLLCVLLLCGAVFSLPRQETYRQLARGSR). The 82-residue stretch at 45–126 (CYKDQGVTYR…TSESCSVPVC (82 aa)) folds into the Kringle domain. 9 disulfide bridges follow: Cys45–Cys126, Cys66–Cys108, Cys97–Cys121, Cys131–Cys262, Cys174–Cys190, Cys182–Cys251, Cys276–Cys351, Cys308–Cys324, and Cys341–Cys369. One can recognise a Peptidase S1 domain in the interval 143-393 (STGGLFTDIT…YLGWIRDNMR (251 aa)). Catalysis depends on charge relay system residues His189 and Asp238. Asn315 carries an N-linked (GlcNAc...) asparagine glycan. Ser345 (charge relay system) is an active-site residue.

It belongs to the peptidase S1 family. In terms of assembly, monomer.

The protein resides in the secreted. It carries out the reaction Specific cleavage of Arg-|-Val bond in plasminogen to form plasmin.. Functionally, probably essential to support the feeding habits of this exclusively haematophagous animal. Probable potent thrombolytic agent. In Desmodus rotundus (Vampire bat), this protein is Salivary plasminogen activator gamma.